Here is a 204-residue protein sequence, read N- to C-terminus: MVSVELLRVDPLTAARRLLGAVLTCRGVSATVVEVEAYGGPPDGPWPDAAAHSYRGPGPRNQVMFGPAGRLYTYRSHGIHVCANVACADDGVAAAVLLRAAVIESGHDVVQRRRGEAVRESAFARGPGNLCSALGITMADNGIDVFAEDSPVHLRLGEEQPCIAGPRVGVSKAADRPWRLWLAGRPEVSAYRRSPRAPAPGGSD.

This sequence belongs to the DNA glycosylase MPG family.

In Mycobacterium sp. (strain KMS), this protein is Putative 3-methyladenine DNA glycosylase.